The following is a 257-amino-acid chain: Ribosomal RNA small subunit methyltransferase J (257 aa).

Residues 107–108 (RD), 123–124 (ER), and Asp-177 contribute to the S-adenosyl-L-methionine site.

The protein belongs to the methyltransferase superfamily. RsmJ family.

Its subcellular location is the cytoplasm. The catalysed reaction is guanosine(1516) in 16S rRNA + S-adenosyl-L-methionine = N(2)-methylguanosine(1516) in 16S rRNA + S-adenosyl-L-homocysteine + H(+). Functionally, specifically methylates the guanosine in position 1516 of 16S rRNA. The protein is Ribosomal RNA small subunit methyltransferase J of Haemophilus influenzae (strain 86-028NP).